Here is a 181-residue protein sequence, read N- to C-terminus: Acireductone dioxygenase (181 aa).

Residues His91, His93, Glu97, and His136 each coordinate Fe(2+). Residues His91, His93, Glu97, and His136 each coordinate Ni(2+).

This sequence belongs to the acireductone dioxygenase (ARD) family. Monomer. Interacts with MMP14. It depends on Fe(2+) as a cofactor. The cofactor is Ni(2+).

The protein resides in the cytoplasm. It localises to the nucleus. The protein localises to the cell membrane. The catalysed reaction is 1,2-dihydroxy-5-(methylsulfanyl)pent-1-en-3-one + O2 = 4-methylsulfanyl-2-oxobutanoate + formate + 2 H(+). It carries out the reaction 1,2-dihydroxy-5-(methylsulfanyl)pent-1-en-3-one + O2 = 3-(methylsulfanyl)propanoate + CO + formate + 2 H(+). The protein operates within amino-acid biosynthesis; L-methionine biosynthesis via salvage pathway; L-methionine from S-methyl-5-thio-alpha-D-ribose 1-phosphate: step 5/6. Functionally, catalyzes 2 different reactions between oxygen and the acireductone 1,2-dihydroxy-3-keto-5-methylthiopentene (DHK-MTPene) depending upon the metal bound in the active site. Fe-containing acireductone dioxygenase (Fe-ARD) produces formate and 2-keto-4-methylthiobutyrate (KMTB), the alpha-ketoacid precursor of methionine in the methionine recycle pathway. Ni-containing acireductone dioxygenase (Ni-ARD) produces methylthiopropionate, carbon monoxide and formate, and does not lie on the methionine recycle pathway. The protein is Acireductone dioxygenase (adi1) of Danio rerio (Zebrafish).